The following is a 306-amino-acid chain: Curved DNA-binding protein (306 aa).

Positions aspartate 5–tryptophan 69 constitute a J domain.

It localises to the cytoplasm. Its subcellular location is the nucleoid. Functionally, DNA-binding protein that preferentially recognizes a curved DNA sequence. It is probably a functional analog of DnaJ; displays overlapping activities with DnaJ, but functions under different conditions, probably acting as a molecular chaperone in an adaptive response to environmental stresses other than heat shock. Lacks autonomous chaperone activity; binds native substrates and targets them for recognition by DnaK. Its activity is inhibited by the binding of CbpM. This Escherichia fergusonii (strain ATCC 35469 / DSM 13698 / CCUG 18766 / IAM 14443 / JCM 21226 / LMG 7866 / NBRC 102419 / NCTC 12128 / CDC 0568-73) protein is Curved DNA-binding protein.